The sequence spans 203 residues: UPF0637 protein EF_3078 (203 aa).

This sequence belongs to the UPF0637 family.

This Enterococcus faecalis (strain ATCC 700802 / V583) protein is UPF0637 protein EF_3078.